A 439-amino-acid chain; its full sequence is High-energy light unresponsive protein 1 (439 aa).

Residues 1–67 (MPPPSSHSNI…LGLNQSIRPN (67 aa)) are Cytoplasmic-facing. A helical transmembrane segment spans residues 68 to 88 (NSLLFRIYSWLVFCLLLFTTL). Residues 89–114 (RKFNQVGVRPNGTRENLQEFFANPRS) are Extracellular-facing. Residues 115-135 (MITLCNALIMLSGLLASLQLY) traverse the membrane as a helical segment. Residues 136-164 (TLGAKRLKPLKILCQFSLNVRTKQAERRQ) are Cytoplasmic-facing. The chain crosses the membrane as a helical span at residues 165 to 185 (FMINTFLAVFSGLLALTMAAT). Over 186-211 (YAMSKWGYILYIVGTPNLDTETIFCV) the chain is Extracellular. The helical transmembrane segment at 212 to 232 (LLDSYALFVSRAAISALAILF) threads the bilayer. At 233 to 290 (YQHCSVIRRSIKHLINEMVPAEQDECPLPESSLQKIHDCQISYQRIFNGKAVIEEYYS) the chain is on the cytoplasmic side. The chain crosses the membrane as a helical span at residues 291–311 (FVLFYSYGVCIPIFCFLMFVG). Topologically, residues 312 to 324 (MSAQSICWSEVVS) are extracellular. Residues 325–345 (IVIWIVNAILVLLLFSLPAFM) traverse the membrane as a helical segment. At 346–402 (INEDGDRLVASSFRMYHETFHEERDLTVLSQMTFFTFQIHSTKLTLSACNYFYMDRS) the chain is on the cytoplasmic side. A helical transmembrane segment spans residues 403–423 (ILLSLFSAILTYFLILWEFDI). At 424–439 (KNNQSLQNIANHTIHT) the chain is on the extracellular side.

This sequence belongs to the insect chemoreceptor superfamily. Gustatory receptor (GR) family. Expressed in the AVG and PVT neurons of the tail.

It is found in the cell membrane. Its function is as follows. Photoreceptor for short wavelength (UV) light that mediates UV-light-induced avoidance behavior. Directly senses and absorbs both UV-A and UV-B light with very high efficiency. Absorption of UV-B but not UV-A light shows resistance to photobleaching. In contrast to other photoreceptors, does not use a prosthetic chromophore to capture photons and only depends on its protein conformation. Might have a role in response to white light exposure. The sequence is that of High-energy light unresponsive protein 1 from Caenorhabditis elegans.